Reading from the N-terminus, the 97-residue chain is Large ribosomal subunit protein uL23 (97 aa).

This sequence belongs to the universal ribosomal protein uL23 family. Part of the 50S ribosomal subunit. Contacts protein L29, and trigger factor when it is bound to the ribosome.

Its function is as follows. One of the early assembly proteins it binds 23S rRNA. One of the proteins that surrounds the polypeptide exit tunnel on the outside of the ribosome. Forms the main docking site for trigger factor binding to the ribosome. The chain is Large ribosomal subunit protein uL23 from Sinorhizobium medicae (strain WSM419) (Ensifer medicae).